The sequence spans 189 residues: Peptidyl-tRNA hydrolase (189 aa).

Y15 contacts tRNA. The Proton acceptor role is filled by H20. F66, N68, and N114 together coordinate tRNA.

It belongs to the PTH family. Monomer.

It localises to the cytoplasm. The enzyme catalyses an N-acyl-L-alpha-aminoacyl-tRNA + H2O = an N-acyl-L-amino acid + a tRNA + H(+). Hydrolyzes ribosome-free peptidyl-tRNAs (with 1 or more amino acids incorporated), which drop off the ribosome during protein synthesis, or as a result of ribosome stalling. Its function is as follows. Catalyzes the release of premature peptidyl moieties from peptidyl-tRNA molecules trapped in stalled 50S ribosomal subunits, and thus maintains levels of free tRNAs and 50S ribosomes. In Streptococcus equi subsp. zooepidemicus (strain H70), this protein is Peptidyl-tRNA hydrolase.